Reading from the N-terminus, the 340-residue chain is Fructose-1,6-bisphosphatase class 1 (340 aa).

Mg(2+) is bound by residues E107, D126, L128, and D129. N215 is a substrate binding site. A Mg(2+)-binding site is contributed by E287.

Belongs to the FBPase class 1 family. In terms of assembly, homotetramer. The cofactor is Mg(2+).

It localises to the cytoplasm. It carries out the reaction beta-D-fructose 1,6-bisphosphate + H2O = beta-D-fructose 6-phosphate + phosphate. The protein operates within carbohydrate biosynthesis; gluconeogenesis. In Brucella anthropi (strain ATCC 49188 / DSM 6882 / CCUG 24695 / JCM 21032 / LMG 3331 / NBRC 15819 / NCTC 12168 / Alc 37) (Ochrobactrum anthropi), this protein is Fructose-1,6-bisphosphatase class 1.